Consider the following 250-residue polypeptide: 4-hydroxy-tetrahydrodipicolinate reductase (250 aa).

NAD(+)-binding positions include 10–15 (GARGRI), 78–80 (GTT), and 105–108 (APNF). H135 functions as the Proton donor/acceptor in the catalytic mechanism. H136 is a (S)-2,3,4,5-tetrahydrodipicolinate binding site. Residue K139 is the Proton donor of the active site. 145–146 (GT) serves as a coordination point for (S)-2,3,4,5-tetrahydrodipicolinate. Residues 158–177 (RAEAGSAPQPDATTTALDGA) form a disordered region.

This sequence belongs to the DapB family.

Its subcellular location is the cytoplasm. It carries out the reaction (S)-2,3,4,5-tetrahydrodipicolinate + NAD(+) + H2O = (2S,4S)-4-hydroxy-2,3,4,5-tetrahydrodipicolinate + NADH + H(+). It catalyses the reaction (S)-2,3,4,5-tetrahydrodipicolinate + NADP(+) + H2O = (2S,4S)-4-hydroxy-2,3,4,5-tetrahydrodipicolinate + NADPH + H(+). The protein operates within amino-acid biosynthesis; L-lysine biosynthesis via DAP pathway; (S)-tetrahydrodipicolinate from L-aspartate: step 4/4. In terms of biological role, catalyzes the conversion of 4-hydroxy-tetrahydrodipicolinate (HTPA) to tetrahydrodipicolinate. This is 4-hydroxy-tetrahydrodipicolinate reductase from Streptomyces griseus subsp. griseus (strain JCM 4626 / CBS 651.72 / NBRC 13350 / KCC S-0626 / ISP 5235).